A 204-amino-acid chain; its full sequence is LexA repressor (204 aa).

The H-T-H motif DNA-binding region spans 28–48 (RAEIAQELGFKSPNAAEEHLK). Catalysis depends on for autocatalytic cleavage activity residues Ser-125 and Lys-162.

Belongs to the peptidase S24 family. As to quaternary structure, homodimer.

It carries out the reaction Hydrolysis of Ala-|-Gly bond in repressor LexA.. Represses a number of genes involved in the response to DNA damage (SOS response), including recA and lexA. In the presence of single-stranded DNA, RecA interacts with LexA causing an autocatalytic cleavage which disrupts the DNA-binding part of LexA, leading to derepression of the SOS regulon and eventually DNA repair. This is LexA repressor from Pseudomonas aeruginosa (strain LESB58).